A 247-amino-acid polypeptide reads, in one-letter code: Segregation and condensation protein A (247 aa).

It belongs to the ScpA family. As to quaternary structure, component of a cohesin-like complex composed of ScpA, ScpB and the Smc homodimer, in which ScpA and ScpB bind to the head domain of Smc. The presence of the three proteins is required for the association of the complex with DNA.

Its subcellular location is the cytoplasm. Its function is as follows. Participates in chromosomal partition during cell division. May act via the formation of a condensin-like complex containing Smc and ScpB that pull DNA away from mid-cell into both cell halves. This is Segregation and condensation protein A from Bacillus cereus (strain AH187).